The primary structure comprises 133 residues: Small ribosomal subunit protein uS8 (133 aa).

Belongs to the universal ribosomal protein uS8 family. As to quaternary structure, part of the 30S ribosomal subunit. Contacts proteins S5 and S12.

Functionally, one of the primary rRNA binding proteins, it binds directly to 16S rRNA central domain where it helps coordinate assembly of the platform of the 30S subunit. In Chlamydia trachomatis serovar A (strain ATCC VR-571B / DSM 19440 / HAR-13), this protein is Small ribosomal subunit protein uS8.